The chain runs to 606 residues: DNA mismatch repair protein MutL (606 aa).

The disordered stretch occupies residues 340–366; that stretch reads MNAFRPGYSPSGLRPSPSATWSAATSP. Positions 353-366 are enriched in low complexity; the sequence is RPSPSATWSAATSP.

The protein belongs to the DNA mismatch repair MutL/HexB family.

In terms of biological role, this protein is involved in the repair of mismatches in DNA. It is required for dam-dependent methyl-directed DNA mismatch repair. May act as a 'molecular matchmaker', a protein that promotes the formation of a stable complex between two or more DNA-binding proteins in an ATP-dependent manner without itself being part of a final effector complex. This is DNA mismatch repair protein MutL from Agrobacterium fabrum (strain C58 / ATCC 33970) (Agrobacterium tumefaciens (strain C58)).